We begin with the raw amino-acid sequence, 372 residues long: Histidinol-phosphate aminotransferase (372 aa).

At Lys230 the chain carries N6-(pyridoxal phosphate)lysine.

The protein belongs to the class-II pyridoxal-phosphate-dependent aminotransferase family. Histidinol-phosphate aminotransferase subfamily. As to quaternary structure, homodimer. Pyridoxal 5'-phosphate serves as cofactor.

It catalyses the reaction L-histidinol phosphate + 2-oxoglutarate = 3-(imidazol-4-yl)-2-oxopropyl phosphate + L-glutamate. It functions in the pathway amino-acid biosynthesis; L-histidine biosynthesis; L-histidine from 5-phospho-alpha-D-ribose 1-diphosphate: step 7/9. The chain is Histidinol-phosphate aminotransferase from Paenarthrobacter aurescens (strain TC1).